A 337-amino-acid chain; its full sequence is Phenylalanine--tRNA ligase alpha subunit (337 aa).

Mg(2+) is bound at residue E252.

It belongs to the class-II aminoacyl-tRNA synthetase family. Phe-tRNA synthetase alpha subunit type 1 subfamily. As to quaternary structure, tetramer of two alpha and two beta subunits. Mg(2+) is required as a cofactor.

It is found in the cytoplasm. The enzyme catalyses tRNA(Phe) + L-phenylalanine + ATP = L-phenylalanyl-tRNA(Phe) + AMP + diphosphate + H(+). The polypeptide is Phenylalanine--tRNA ligase alpha subunit (Saccharophagus degradans (strain 2-40 / ATCC 43961 / DSM 17024)).